The following is a 245-amino-acid chain: Uridylate kinase (245 aa).

12–15 (KLSG) serves as a coordination point for ATP. The interval 20 to 25 (GEKGVG) is involved in allosteric activation by GTP. UMP is bound at residue Gly54. The ATP site is built by Gly55 and Arg59. UMP is bound by residues Asp74 and 135 to 142 (IGSPYFST). ATP contacts are provided by Asn163, Tyr169, and Asp172.

Belongs to the UMP kinase family. In terms of assembly, homohexamer.

Its subcellular location is the cytoplasm. The enzyme catalyses UMP + ATP = UDP + ADP. It functions in the pathway pyrimidine metabolism; CTP biosynthesis via de novo pathway; UDP from UMP (UMPK route): step 1/1. Allosterically activated by GTP. Inhibited by UTP. Functionally, catalyzes the reversible phosphorylation of UMP to UDP. The sequence is that of Uridylate kinase from Streptococcus thermophilus (strain ATCC BAA-491 / LMD-9).